A 635-amino-acid chain; its full sequence is Extracellular metalloproteinase MEP (635 aa).

Residues 1-19 form the signal peptide; it reads MRAFLLASLASLPAVNVYA. A propeptide spanning residues 20–244 is cleaved from the precursor; sequence HPTHNSRGLT…VHAVVDYAAE (225 aa). N-linked (GlcNAc...) asparagine glycans are attached at residues N287, N302, and N336. Zn(2+) is bound at residue H429. E430 is a catalytic residue. H433 provides a ligand contact to Zn(2+).

This sequence belongs to the peptidase M36 family. Requires Zn(2+) as cofactor.

It localises to the secreted. Functionally, secreted metalloproteinase that allows assimilation of proteinaceous substrates. The polypeptide is Extracellular metalloproteinase MEP (MEP) (Leptosphaeria maculans (strain JN3 / isolate v23.1.3 / race Av1-4-5-6-7-8) (Blackleg fungus)).